We begin with the raw amino-acid sequence, 148 residues long: Large ribosomal subunit protein uL15 (148 aa).

Over residues 1-30 the composition is skewed to basic residues; the sequence is MPSRLRKTRKLRGHVSHGHGRIGKHRKHPG. Positions 1-39 are disordered; that stretch reads MPSRLRKTRKLRGHVSHGHGRIGKHRKHPGGRGNAGGLH. H39 carries the (3S)-3-hydroxyhistidine modification. N6-acetyllysine occurs at positions 47 and 55. S68 bears the Phosphoserine mark. K110 bears the N6-acetyllysine mark.

The protein belongs to the universal ribosomal protein uL15 family. In terms of assembly, component of the large ribosomal subunit. In terms of processing, hydroxylated on His-39 by MINA.

Its subcellular location is the cytoplasm. Component of the large ribosomal subunit. The ribosome is a large ribonucleoprotein complex responsible for the synthesis of proteins in the cell. The chain is Large ribosomal subunit protein uL15 (RPL27A) from Macaca fascicularis (Crab-eating macaque).